The primary structure comprises 308 residues: MRPRITFRPLHGILLLDKPAGLSSNNALQAARRLLRAEKGGHTGSLDPLATGLLPLCFGEATKIAGLLLGSAKAYDAEIVLGVTTDTDDADGQPLRERSVPALSEAALQAALAPFIGRIQQQAPIYSALKQGGEPLYAKARRGEVIEAPVREVEVHAITLTSYASPRLRLRVTCGSGTYIRSLARDLGEVLGCGAHIAALRRVWVEPFRTPEMITLEALTALVESGADAAQLLLPVAAGLSDFAQITLDATLAARFRMGQRLRDPAFPEGQVAVFDADGSPAGLGLVDADGRLSPQRLFNGLNAAAAC.

Aspartate 47 (nucleophile) is an active-site residue.

Belongs to the pseudouridine synthase TruB family. Type 1 subfamily.

The catalysed reaction is uridine(55) in tRNA = pseudouridine(55) in tRNA. In terms of biological role, responsible for synthesis of pseudouridine from uracil-55 in the psi GC loop of transfer RNAs. In Xanthomonas campestris pv. campestris (strain 8004), this protein is tRNA pseudouridine synthase B.